A 313-amino-acid polypeptide reads, in one-letter code: Dehydrogenase/reductase SDR family member 1 (313 aa).

An N-acetylalanine modification is found at alanine 2. Isoleucine 19 contributes to the NAD(+) binding site. Position 21 is an omega-N-methylarginine (arginine 21). Residue aspartate 64 participates in NAD(+) binding. Substrate is bound at residue serine 151. NAD(+) contacts are provided by tyrosine 163, lysine 167, and threonine 198. Tyrosine 163 serves as the catalytic Proton acceptor. Residues 235-313 are required for ER localization; it reads CVVALATDPN…WIIALYTSKF (79 aa).

Belongs to the short-chain dehydrogenases/reductases (SDR) family. As to expression, detected in heart, liver, adrenal glands, and at low levels in skeletal muscle, kidney, pancreas and brain.

It is found in the endoplasmic reticulum. It carries out the reaction 17alpha-estradiol + NADP(+) = estrone + NADPH + H(+). The enzyme catalyses testosterone + NADP(+) = androst-4-ene-3,17-dione + NADPH + H(+). It catalyses the reaction prostaglandin E1 + NADPH + H(+) = prostaglandin F1 + NADP(+). The catalysed reaction is isatin + NADPH + H(+) = 3-hydroxyindolin-2-one + NADP(+). NADPH-dependent oxidoreductase which catalyzes the reduction of steroids (estrone, androstene-3,17-dione and cortisone) as well as prostaglandin E1, isatin and xenobiotics in vitro. May have a role in steroid and/or xenobiotic metabolism. The polypeptide is Dehydrogenase/reductase SDR family member 1 (Homo sapiens (Human)).